The sequence spans 294 residues: Probable HTH-type transcriptional regulator LrrA (294 aa).

An HTH lysR-type domain is found at 1-58; that stretch reads MNITQLQILAAVVETGNFSAAALQLDLSQSAVSRAIAALEDELGVVLLSRGRFGARPT. Residues 18 to 37 constitute a DNA-binding region (H-T-H motif); sequence FSAAALQLDLSQSAVSRAIA.

It belongs to the LysR transcriptional regulatory family.

This chain is Probable HTH-type transcriptional regulator LrrA (lrrA), found in Synechococcus elongatus (strain ATCC 33912 / PCC 7942 / FACHB-805) (Anacystis nidulans R2).